Reading from the N-terminus, the 171-residue chain is Ribosome maturation factor RimM (171 aa).

A PRC barrel domain is found at 97–169 (DGEFYYHEII…RVDVDIMEGL (73 aa)).

Belongs to the RimM family. As to quaternary structure, binds ribosomal protein uS19.

The protein localises to the cytoplasm. Functionally, an accessory protein needed during the final step in the assembly of 30S ribosomal subunit, possibly for assembly of the head region. Essential for efficient processing of 16S rRNA. May be needed both before and after RbfA during the maturation of 16S rRNA. It has affinity for free ribosomal 30S subunits but not for 70S ribosomes. This is Ribosome maturation factor RimM from Lactococcus lactis subsp. cremoris (strain MG1363).